We begin with the raw amino-acid sequence, 166 residues long: Lipoprotein signal peptidase (166 aa).

3 consecutive transmembrane segments (helical) span residues 12 to 32 (WLWL…LILQ), 70 to 90 (WFFA…MYRS), and 102 to 122 (ALII…GFVV). Catalysis depends on residues D123 and D141. Residues 137-157 (FNLADTAICIGAALIVLEGFL) traverse the membrane as a helical segment.

This sequence belongs to the peptidase A8 family.

It localises to the cell inner membrane. The catalysed reaction is Release of signal peptides from bacterial membrane prolipoproteins. Hydrolyzes -Xaa-Yaa-Zaa-|-(S,diacylglyceryl)Cys-, in which Xaa is hydrophobic (preferably Leu), and Yaa (Ala or Ser) and Zaa (Gly or Ala) have small, neutral side chains.. It functions in the pathway protein modification; lipoprotein biosynthesis (signal peptide cleavage). This protein specifically catalyzes the removal of signal peptides from prolipoproteins. In Salmonella paratyphi A (strain ATCC 9150 / SARB42), this protein is Lipoprotein signal peptidase.